The sequence spans 223 residues: MSQSTASLVPEGNQGSLQEDVSFDFNGVPGQALDAVRMRLAQLTHSLRRIRDEMSKAELPQWYTLQSQLNVTLSQLVSVTSTLQHFQETLDSTVVYPLPKFPTTSHESLVTTLLRKKNIPEVDEWMKYVRETSGVTTALLKDEEIEKLLQQDREITNWARTTFRNEYGKHDFKNEESLSEEHASLLVRDSKPSKPFNVDDVLKFTFTGEKPIITGSTSTSSSN.

The interval 2-138 (SQSTASLVPE…VRETSGVTTA (137 aa)) is interaction with TBP1. Residues 33–59 (LDAVRMRLAQLTHSLRRIRDEMSKAEL) are a coiled coil.

This sequence belongs to the Mediator complex subunit 8 family. As to quaternary structure, component of the Mediator complex, which is composed of at least 21 subunits that form three structurally distinct submodules. The Mediator head module contains MED6, MED8, MED11, SRB4/MED17, SRB5/MED18, ROX3/MED19, SRB2/MED20 and SRB6/MED22, the middle module contains MED1, MED4, NUT1/MED5, MED7, CSE2/MED9, NUT2/MED10, SRB7/MED21 and SOH1/MED31, and the tail module contains MED2, PGD1/MED3, RGR1/MED14, GAL11/MED15 and SIN4/MED16. The head and the middle modules interact directly with RNA polymerase II, whereas the elongated tail module interacts with gene-specific regulatory proteins. MED8 interacts directly with SRB5/MED18. Also interacts with Hexokinase B (HXK2). Interacts with TBP1.

The protein resides in the nucleus. In terms of biological role, component of the Mediator complex, a coactivator involved in the regulated transcription of nearly all RNA polymerase II-dependent genes. Mediator functions as a bridge to convey information from gene-specific regulatory proteins to the basal RNA polymerase II transcription machinery. The Mediator complex, having a compact conformation in its free form, is recruited to promoters by direct interactions with regulatory proteins and serves for the assembly of a functional preinitiation complex with RNA polymerase II and the general transcription factors. The Mediator complex unfolds to an extended conformation and partially surrounds RNA polymerase II, specifically interacting with the unphosphorylated form of the C-terminal domain (CTD) of RNA polymerase II. The Mediator complex dissociates from the RNA polymerase II holoenzyme and stays at the promoter when transcriptional elongation begins. MED8 binds to the consensus sequence 5'-[AC][AG]GAAAT-3' in both the UAS of SUC2 and the DRS2 of HXK2. In Saccharomyces cerevisiae (strain ATCC 204508 / S288c) (Baker's yeast), this protein is Mediator of RNA polymerase II transcription subunit 8 (MED8).